The following is a 126-amino-acid chain: Large ribosomal subunit protein eL18 (126 aa).

Belongs to the eukaryotic ribosomal protein eL18 family.

The polypeptide is Large ribosomal subunit protein eL18 (Methanosarcina acetivorans (strain ATCC 35395 / DSM 2834 / JCM 12185 / C2A)).